The primary structure comprises 257 residues: Hydroxyacylglutathione hydrolase (257 aa).

Zn(2+) is bound by residues His54, His56, Asp58, His59, His113, Asp137, and His175.

It belongs to the metallo-beta-lactamase superfamily. Glyoxalase II family. As to quaternary structure, monomer. Zn(2+) serves as cofactor.

The enzyme catalyses an S-(2-hydroxyacyl)glutathione + H2O = a 2-hydroxy carboxylate + glutathione + H(+). It participates in secondary metabolite metabolism; methylglyoxal degradation; (R)-lactate from methylglyoxal: step 2/2. Its function is as follows. Thiolesterase that catalyzes the hydrolysis of S-D-lactoyl-glutathione to form glutathione and D-lactic acid. This chain is Hydroxyacylglutathione hydrolase, found in Rippkaea orientalis (strain PCC 8801 / RF-1) (Cyanothece sp. (strain PCC 8801)).